Consider the following 59-residue polypeptide: UPF0434 protein GOX0764 (59 aa).

This sequence belongs to the UPF0434 family.

This Gluconobacter oxydans (strain 621H) (Gluconobacter suboxydans) protein is UPF0434 protein GOX0764.